The chain runs to 125 residues: uncharacterized protein (125 aa).

The interval 1-21 is disordered; that stretch reads MLFYHCSSFSSSSSSSSSSAS. Positions 7-21 are enriched in low complexity; the sequence is SSFSSSSSSSSSSAS.

This is an uncharacterized protein from Saccharomyces cerevisiae (strain ATCC 204508 / S288c) (Baker's yeast).